The chain runs to 426 residues: UDP-N-acetylglucosamine--N-acetylmuramyl-(pentapeptide) pyrophosphoryl-undecaprenol N-acetylglucosamine transferase (426 aa).

UDP-N-acetyl-alpha-D-glucosamine is bound by residues 28-30, N140, R176, S204, I257, and Q302; that span reads TGG. A disordered region spans residues 369 to 388; that stretch reads AGNGPSGMGNGHSSEQPQER.

Belongs to the glycosyltransferase 28 family. MurG subfamily.

It localises to the cell inner membrane. It catalyses the reaction di-trans,octa-cis-undecaprenyl diphospho-N-acetyl-alpha-D-muramoyl-L-alanyl-D-glutamyl-meso-2,6-diaminopimeloyl-D-alanyl-D-alanine + UDP-N-acetyl-alpha-D-glucosamine = di-trans,octa-cis-undecaprenyl diphospho-[N-acetyl-alpha-D-glucosaminyl-(1-&gt;4)]-N-acetyl-alpha-D-muramoyl-L-alanyl-D-glutamyl-meso-2,6-diaminopimeloyl-D-alanyl-D-alanine + UDP + H(+). Its pathway is cell wall biogenesis; peptidoglycan biosynthesis. Functionally, cell wall formation. Catalyzes the transfer of a GlcNAc subunit on undecaprenyl-pyrophosphoryl-MurNAc-pentapeptide (lipid intermediate I) to form undecaprenyl-pyrophosphoryl-MurNAc-(pentapeptide)GlcNAc (lipid intermediate II). This Xanthomonas axonopodis pv. citri (strain 306) protein is UDP-N-acetylglucosamine--N-acetylmuramyl-(pentapeptide) pyrophosphoryl-undecaprenol N-acetylglucosamine transferase.